Here is a 404-residue protein sequence, read N- to C-terminus: Biflaviolin synthase CYP158A2 (404 aa).

Flaviolin-binding residues include Arg-288 and Leu-293. Residue Cys-353 coordinates heme.

The protein belongs to the cytochrome P450 family. Heme serves as cofactor.

The enzyme catalyses 2 flaviolin + 2 reduced [2Fe-2S]-[ferredoxin] + O2 + H(+) = 3,3'-biflaviolin + 2 oxidized [2Fe-2S]-[ferredoxin] + 2 H2O. It catalyses the reaction 2 flaviolin + 2 reduced [2Fe-2S]-[ferredoxin] + O2 + H(+) = 3,8'-biflaviolin + 2 oxidized [2Fe-2S]-[ferredoxin] + 2 H2O. The protein operates within pigment biosynthesis. Functionally, catalyzes oxidative C-C coupling reaction to polymerize flaviolin and form highly conjugated pigments which protect the soil bacterium from deleterious effects of UV irradiation (three isomers of biflaviolin and one triflaviolin). The protein is Biflaviolin synthase CYP158A2 of Streptomyces coelicolor (strain ATCC BAA-471 / A3(2) / M145).